The chain runs to 973 residues: UvrABC system protein A (973 aa).

Residue glycine 34–serine 41 coordinates ATP. 2 ABC transporter domains span residues tryptophan 330–isoleucine 609 and alanine 629–lysine 958. Glycine 662–serine 669 is a binding site for ATP. A C4-type zinc finger spans residues cysteine 761–cysteine 787.

Belongs to the ABC transporter superfamily. UvrA family. In terms of assembly, forms a heterotetramer with UvrB during the search for lesions.

Its subcellular location is the cytoplasm. Its function is as follows. The UvrABC repair system catalyzes the recognition and processing of DNA lesions. UvrA is an ATPase and a DNA-binding protein. A damage recognition complex composed of 2 UvrA and 2 UvrB subunits scans DNA for abnormalities. When the presence of a lesion has been verified by UvrB, the UvrA molecules dissociate. The protein is UvrABC system protein A of Mesorhizobium japonicum (strain LMG 29417 / CECT 9101 / MAFF 303099) (Mesorhizobium loti (strain MAFF 303099)).